The sequence spans 877 residues: Alanine--tRNA ligase (877 aa).

Zn(2+) is bound by residues histidine 562, histidine 566, cysteine 664, and histidine 668.

Belongs to the class-II aminoacyl-tRNA synthetase family. Zn(2+) is required as a cofactor.

The protein resides in the cytoplasm. The catalysed reaction is tRNA(Ala) + L-alanine + ATP = L-alanyl-tRNA(Ala) + AMP + diphosphate. Its function is as follows. Catalyzes the attachment of alanine to tRNA(Ala) in a two-step reaction: alanine is first activated by ATP to form Ala-AMP and then transferred to the acceptor end of tRNA(Ala). Also edits incorrectly charged Ser-tRNA(Ala) and Gly-tRNA(Ala) via its editing domain. The sequence is that of Alanine--tRNA ligase from Picosynechococcus sp. (strain ATCC 27264 / PCC 7002 / PR-6) (Agmenellum quadruplicatum).